We begin with the raw amino-acid sequence, 245 residues long: Probable phosphatase YcdX (245 aa).

The Zn(2+) site is built by histidine 7, histidine 9, histidine 15, histidine 40, glutamate 73, histidine 101, histidine 131, aspartate 192, and histidine 194.

It belongs to the PHP family. As to quaternary structure, homotrimer. Requires Zn(2+) as cofactor.

This is Probable phosphatase YcdX from Salmonella agona (strain SL483).